The primary structure comprises 314 residues: Methionyl-tRNA formyltransferase (314 aa).

Residue 113 to 116 (SLLP) coordinates (6S)-5,6,7,8-tetrahydrofolate.

This sequence belongs to the Fmt family.

The enzyme catalyses L-methionyl-tRNA(fMet) + (6R)-10-formyltetrahydrofolate = N-formyl-L-methionyl-tRNA(fMet) + (6S)-5,6,7,8-tetrahydrofolate + H(+). In terms of biological role, attaches a formyl group to the free amino group of methionyl-tRNA(fMet). The formyl group appears to play a dual role in the initiator identity of N-formylmethionyl-tRNA by promoting its recognition by IF2 and preventing the misappropriation of this tRNA by the elongation apparatus. The protein is Methionyl-tRNA formyltransferase of Chlorobaculum tepidum (strain ATCC 49652 / DSM 12025 / NBRC 103806 / TLS) (Chlorobium tepidum).